Here is a 213-residue protein sequence, read N- to C-terminus: Orotate phosphoribosyltransferase (213 aa).

Residue Lys26 coordinates 5-phospho-alpha-D-ribose 1-diphosphate. Orotate is bound at residue 34-35; that stretch reads FF. Residues 72–73, Arg98, Lys99, Lys102, and 123–131 each bind 5-phospho-alpha-D-ribose 1-diphosphate; these read YK and DDVISAGTS. Positions 127 and 155 each coordinate orotate.

The protein belongs to the purine/pyrimidine phosphoribosyltransferase family. PyrE subfamily. As to quaternary structure, homodimer. Requires Mg(2+) as cofactor.

The catalysed reaction is orotidine 5'-phosphate + diphosphate = orotate + 5-phospho-alpha-D-ribose 1-diphosphate. Its pathway is pyrimidine metabolism; UMP biosynthesis via de novo pathway; UMP from orotate: step 1/2. Its function is as follows. Catalyzes the transfer of a ribosyl phosphate group from 5-phosphoribose 1-diphosphate to orotate, leading to the formation of orotidine monophosphate (OMP). The protein is Orotate phosphoribosyltransferase of Neisseria gonorrhoeae (strain NCCP11945).